Here is a 239-residue protein sequence, read N- to C-terminus: Cysteine-rich venom protein (239 aa).

Residues 1–19 form the signal peptide; it reads MIAFLVLPILAAVLQQSSG. In terms of domain architecture, SCP spans 39 to 166; it reads DLHNSLRRSV…EYKYFYVCQY (128 aa). Intrachain disulfides connect cysteine 75/cysteine 153, cysteine 92/cysteine 167, cysteine 148/cysteine 164, cysteine 186/cysteine 193, cysteine 189/cysteine 198, cysteine 202/cysteine 234, cysteine 211/cysteine 228, and cysteine 219/cysteine 232. In terms of domain architecture, ShKT spans 202 to 234; that stretch reads CTHEDKFTNCKDLVKQGCNNNYLKTNCPASCSC.

It belongs to the CRISP family. Expressed by the venom gland.

The protein localises to the secreted. Functionally, blocks contraction of smooth muscle elicited by high potassium-induced depolarization, but does not block caffeine-stimulated contraction. May target voltage-gated calcium channels in smooth muscle. This is Cysteine-rich venom protein from Vipera berus (Common European adder).